The primary structure comprises 364 residues: Fructose-bisphosphate aldolase A (364 aa).

Residue tyrosine 5 is modified to Phosphotyrosine. Threonine 9 carries the phosphothreonine modification. Residues serine 36 and serine 39 each carry the phosphoserine modification. Lysine 42 bears the N6-acetyllysine; alternate mark. Residue lysine 42 forms a Glycyl lysine isopeptide (Lys-Gly) (interchain with G-Cter in SUMO1); alternate linkage. Residue lysine 42 forms a Glycyl lysine isopeptide (Lys-Gly) (interchain with G-Cter in SUMO2); alternate linkage. Arginine 43 is a beta-D-fructose 1,6-bisphosphate binding site. At serine 46 the chain carries Phosphoserine. Position 99 is an N6-(2-hydroxyisobutyryl)lysine (lysine 99). An N6-acetyllysine modification is found at lysine 108. The residue at position 111 (lysine 111) is an N6-acetyllysine; alternate. Position 111 is an N6-malonyllysine; alternate (lysine 111). A Phosphoserine modification is found at serine 132. At lysine 147 the chain carries N6-(2-hydroxyisobutyryl)lysine. The active-site Proton acceptor is glutamate 188. Catalysis depends on lysine 230, which acts as the Schiff-base intermediate with dihydroxyacetone-P. Serine 272 carries the phosphoserine modification. Beta-D-fructose 1,6-bisphosphate is bound by residues 272-274, serine 301, and arginine 304; that span reads SGG. Residue lysine 312 is modified to N6-malonyllysine. Lysine 330 carries the N6-acetyllysine modification.

Belongs to the class I fructose-bisphosphate aldolase family. Homotetramer. Interacts with SNX9 and WAS. Interacts with FBP2; the interaction blocks FBP2 inhibition by physiological concentrations of AMP and reduces inhibition by Ca(2+).

The protein localises to the cytoplasm. It localises to the myofibril. It is found in the sarcomere. Its subcellular location is the i band. The protein resides in the m line. The enzyme catalyses beta-D-fructose 1,6-bisphosphate = D-glyceraldehyde 3-phosphate + dihydroxyacetone phosphate. It functions in the pathway carbohydrate degradation; glycolysis; D-glyceraldehyde 3-phosphate and glycerone phosphate from D-glucose: step 4/4. Functionally, catalyzes the reversible conversion of beta-D-fructose 1,6-bisphosphate (FBP) into two triose phosphate and plays a key role in glycolysis and gluconeogenesis. In addition, may also function as scaffolding protein. The protein is Fructose-bisphosphate aldolase A (Aldoa) of Mus musculus (Mouse).